The primary structure comprises 130 residues: Small ribosomal subunit protein uS8 (130 aa).

Belongs to the universal ribosomal protein uS8 family. Part of the 30S ribosomal subunit. Contacts proteins S5 and S12.

In terms of biological role, one of the primary rRNA binding proteins, it binds directly to 16S rRNA central domain where it helps coordinate assembly of the platform of the 30S subunit. The protein is Small ribosomal subunit protein uS8 of Shewanella loihica (strain ATCC BAA-1088 / PV-4).